A 580-amino-acid chain; its full sequence is MSGDYSATRKSENVDTSTTASQEDSSLAPEQPEKLVGASDVAAVSNNEPTADEYPHGLRLITLVLAINLAMFLASLDQTILGTAIPKITDEFHGLSQVSWYGSAYFMCLGGFQSTWGKVYKYFPLKISFAIAVFVFELGSLICGVARNSNTFIVGRAIAGIGGAGITSGSTVILAFSAEPAKRPTLMSTMGVTYCIAFILGPLIGGAFSEKVTWRWCFYINLPIGGLAMALFFLFFRTPSVSTTQDATLKEKLLHMDPVGTVLAMGGIISFILALQYAGVSHAWNSSVVIGLLVGFVLIMVTLAAWEYFQGDYAMLPYRLFKRRVMWAGGIFQFFFVGCYFLLLFYLPIYFQSIKGVSAIHSGVDNLPLVLSACLFIILGGAAVEKTHMATPYMTAGSAVAAVATGLLYTLDVDTSSGKWIGYQVLVGAGLAFPFQNALNILQAEVDADDMSPATSSLYFFQILGGAFSISAAQAAFNNRLLHSLTINAPGVSPLLVLATGASDLRSVFSADELPGVILSYMDGLKAAFAVSVGLVGMAFLSSLHMVMIDSCETLHTTGDDGAWKGKEVKELEVERLYVN.

Positions 1-33 (MSGDYSATRKSENVDTSTTASQEDSSLAPEQPE) are disordered. Residues 14–25 (VDTSTTASQEDS) are compositionally biased toward polar residues. A run of 7 helical transmembrane segments spans residues 60–80 (LITLVLAINLAMFLASLDQTI), 92–112 (FHGLSQVSWYGSAYFMCLGGF), 125–145 (LKISFAIAVFVFELGSLICGV), 157–177 (AIAGIGGAGITSGSTVILAFS), 188–208 (STMGVTYCIAFILGPLIGGAF), 216–236 (WCFYINLPIGGLAMALFFLFF), and 259–279 (VGTVLAMGGIISFILALQYAG). The N-linked (GlcNAc...) asparagine glycan is linked to Asn285. 7 consecutive transmembrane segments (helical) span residues 286 to 306 (SSVVIGLLVGFVLIMVTLAAW), 331 to 351 (IFQFFFVGCYFLLLFYLPIYF), 364 to 384 (VDNLPLVLSACLFIILGGAAV), 389 to 409 (MATPYMTAGSAVAAVATGLLY), 421 to 441 (IGYQVLVGAGLAFPFQNALNI), 457 to 477 (SLYFFQILGGAFSISAAQAAF), and 529 to 549 (FAVSVGLVGMAFLSSLHMVMI).

The protein belongs to the major facilitator superfamily.

The protein resides in the membrane. Functionally, MFS-type transporter; part of the gene cluster that produces the tetronate natural products trihazones. The polypeptide is MFS-type transporter thnB (Trichoderma harzianum (Hypocrea lixii)).